The following is a 239-amino-acid chain: Uridylate kinase (239 aa).

Position 10–13 (10–13 (KFSG)) interacts with ATP. The interval 18–23 (GENGFG) is involved in allosteric activation by GTP. UMP is bound at residue Gly-52. ATP is bound by residues Gly-53 and Arg-57. Residues Asp-73 and 134 to 141 (TGNPYFTT) each bind UMP. Residues Thr-161, Tyr-167, and Asp-170 each coordinate ATP.

Belongs to the UMP kinase family. As to quaternary structure, homohexamer.

It localises to the cytoplasm. It catalyses the reaction UMP + ATP = UDP + ADP. Its pathway is pyrimidine metabolism; CTP biosynthesis via de novo pathway; UDP from UMP (UMPK route): step 1/1. With respect to regulation, allosterically activated by GTP. Inhibited by UTP. In terms of biological role, catalyzes the reversible phosphorylation of UMP to UDP. This Campylobacter jejuni subsp. jejuni serotype O:2 (strain ATCC 700819 / NCTC 11168) protein is Uridylate kinase.